The primary structure comprises 429 residues: Ribosomal RNA small subunit methyltransferase B (429 aa).

S-adenosyl-L-methionine contacts are provided by residues 254–260 (CAAPGGK), Asp277, Asp303, and Asp322. Residue Cys375 is the Nucleophile of the active site.

This sequence belongs to the class I-like SAM-binding methyltransferase superfamily. RsmB/NOP family.

The protein localises to the cytoplasm. It carries out the reaction cytidine(967) in 16S rRNA + S-adenosyl-L-methionine = 5-methylcytidine(967) in 16S rRNA + S-adenosyl-L-homocysteine + H(+). Its function is as follows. Specifically methylates the cytosine at position 967 (m5C967) of 16S rRNA. The protein is Ribosomal RNA small subunit methyltransferase B of Serratia proteamaculans (strain 568).